Reading from the N-terminus, the 837-residue chain is Outer membrane usher protein HifC (837 aa).

A signal peptide spans 1–26 (MKTKNFPLNKIAFACTLLLANPVAWA). C813 and C833 form a disulfide bridge.

This sequence belongs to the fimbrial export usher family.

It localises to the cell outer membrane. Essential for piliation. This is Outer membrane usher protein HifC (hifC) from Haemophilus influenzae.